The sequence spans 385 residues: O-phospho-L-seryl-tRNA:Cys-tRNA synthase (385 aa).

Pyridoxal 5'-phosphate contacts are provided by residues 89–90 (AR), Asn-195, and 218–220 (SGH). Lys-221 carries the post-translational modification N6-(pyridoxal phosphate)lysine.

The protein belongs to the SepCysS family. Homodimer. Interacts with SepRS. Pyridoxal 5'-phosphate is required as a cofactor.

It carries out the reaction O-phospho-L-seryl-tRNA(Cys) + hydrogen sulfide + H(+) = L-cysteinyl-tRNA(Cys) + phosphate. Converts O-phospho-L-seryl-tRNA(Cys) (Sep-tRNA(Cys)) to L-cysteinyl-tRNA(Cys) (Cys-tRNA(Cys)). This Methanococcus aeolicus (strain ATCC BAA-1280 / DSM 17508 / OCM 812 / Nankai-3) protein is O-phospho-L-seryl-tRNA:Cys-tRNA synthase.